The following is a 157-amino-acid chain: MTQPTCPCGSGDPLDDCCGRYHQGHPAPTAEALMRSRYSAYALGLVDYLRDTTLPAQQAGLDLDGIRAWSHGSTWLGLEVENHEVLGGQPEHARVTFVARWHDAEGEHAHRECSGFVQRNGRWYFLDPTVALKLGRNDPCPCGAGGKLKKCCGPWIT.

This sequence belongs to the UPF0225 family.

The chain is UPF0225 protein PA14_50900 from Pseudomonas aeruginosa (strain UCBPP-PA14).